The chain runs to 147 residues: Sentan (147 aa).

Residues 1–36 form a disordered region; sequence MGGCMHSTWDHALHSRGEPRPSEAPASISAPSKMPK. A compositionally biased stretch (basic and acidic residues) spans 8-21; that stretch reads TWDHALHSRGEPRP. The span at 23–32 shows a compositional bias: low complexity; sequence EAPASISAPS.

Belongs to the S-100 family. As to expression, expressed exclusively in ciliated epithelial cells. Detected in ciliated epithelium of trachea and oviduct (at protein level).

Its subcellular location is the cell projection. The protein localises to the cilium. In terms of biological role, may be a component of the linker structure that bridges the ciliary membrane and peripheral singlet microtubules. The sequence is that of Sentan (Sntn) from Mus musculus (Mouse).